The following is a 1241-amino-acid chain: DNA-directed RNA polymerase subunit beta (1241 aa).

This sequence belongs to the RNA polymerase beta chain family. As to quaternary structure, the RNAP catalytic core consists of 2 alpha, 1 beta, 1 beta' and 1 omega subunit. When a sigma factor is associated with the core the holoenzyme is formed, which can initiate transcription.

It carries out the reaction RNA(n) + a ribonucleoside 5'-triphosphate = RNA(n+1) + diphosphate. Its function is as follows. DNA-dependent RNA polymerase catalyzes the transcription of DNA into RNA using the four ribonucleoside triphosphates as substrates. This Clostridium botulinum (strain Alaska E43 / Type E3) protein is DNA-directed RNA polymerase subunit beta.